Here is a 406-residue protein sequence, read N- to C-terminus: 4-hydroxy-3-methylbut-2-en-1-yl diphosphate synthase (ferredoxin) (406 aa).

[4Fe-4S] cluster contacts are provided by Cys315, Cys318, Cys349, and Glu356.

The protein belongs to the IspG family. The cofactor is [4Fe-4S] cluster.

It carries out the reaction (2E)-4-hydroxy-3-methylbut-2-enyl diphosphate + 2 oxidized [2Fe-2S]-[ferredoxin] + H2O = 2-C-methyl-D-erythritol 2,4-cyclic diphosphate + 2 reduced [2Fe-2S]-[ferredoxin] + H(+). The protein operates within isoprenoid biosynthesis; isopentenyl diphosphate biosynthesis via DXP pathway; isopentenyl diphosphate from 1-deoxy-D-xylulose 5-phosphate: step 5/6. Converts 2C-methyl-D-erythritol 2,4-cyclodiphosphate (ME-2,4cPP) into 1-hydroxy-2-methyl-2-(E)-butenyl 4-diphosphate. This chain is 4-hydroxy-3-methylbut-2-en-1-yl diphosphate synthase (ferredoxin), found in Gloeothece citriformis (strain PCC 7424) (Cyanothece sp. (strain PCC 7424)).